Reading from the N-terminus, the 78-residue chain is Small ribosomal subunit protein bS18 (78 aa).

It belongs to the bacterial ribosomal protein bS18 family. Part of the 30S ribosomal subunit. Forms a tight heterodimer with protein bS6.

Binds as a heterodimer with protein bS6 to the central domain of the 16S rRNA, where it helps stabilize the platform of the 30S subunit. This chain is Small ribosomal subunit protein bS18, found in Lactobacillus delbrueckii subsp. bulgaricus (strain ATCC 11842 / DSM 20081 / BCRC 10696 / JCM 1002 / NBRC 13953 / NCIMB 11778 / NCTC 12712 / WDCM 00102 / Lb 14).